The primary structure comprises 2334 residues: MAVASRPCGVATSVLPAKKPLSFFTDLVGKTPPRCIRAPHTLAWPVFADLDNEEESPEICRKCGKYANGFGVFDLTDLGDVCLCSIRPQRHVGGPCCLCNKQYIRACGRYCARVLKHYKAFNKVIPCLHSRQVKPVFEGEVEDLFVELGAPTRMNFTEAELASQGASIMDRFVDLVEPCLSTEDSNFLDNICSDASIRKRLEDEYDVDMIAAARARKDFAKTLKLALQDRERKPDKWYSKLGCITTKGRQWAKKVVHGAKKLSDPLKTLAAILLVALHNCVAVDTTTMLSHFKPVNLLAILLDWTNDLPGFLTTLIRFMELYGVVQSTVNLVVDAIKSFWDRVMCATERCCDLLKRLFDKFEDSVPTGPTAGCLIFMSFVFSVIVGYLPNNSVISTFMKGAGKLTTFAGVIGAIRTLWITINQHMVAKDITSIQEKVMAVVKMANEAATLNQLEIVSVLCSELESTLTNRCTLPSYNQHMGVLNAAQKVVADIHTLVLGKINMTKQRPQPVAVVFKGAPGIGKTYLVHRLAKDLGCPHPSNINFGLDHFDSYTGEDVAIADEFNTSGDERWVELFIQMVNTNPCPLNCDKVENKNKVFSSKYLLCTTNSSMVLNATHPRATAFYRRVIIVDVRNKAVEGWQSTRHGSKPGKHCYTKDMSHLTFQVYPHNMPAPGFVFVGEKLVKSQVAPRELKYNELLDMIKNEHPDANFEGATKHEFVYPDVQYEQALLMWKQYFLMYGCTARLAKVFVDDIPYNQVHVARKSDPRSPGAVHHECELKYIWRMVPHFALGCVNMTNQLGTDLTQSQLDRITCGVEGITVTTVDNILPFHSQNTLINPSFLKLIWALRRHLRGLRGITQVATFIWKVMCNPVCAYDTLIRTLTGAATFSEDPVTTTIVCPNCTIQIHTCGGLLVRYSGDPAPVASDNVDRGNQGIDCLTNPNLIAGFSWRQIADLFSTVMTSLCNNHLVNLATMAAIGAVATKALQGVKGKTKRGRGARINLGNDEYDEWQQMRREFNNAHDMTAEEFLELRNRAAMGSDDADAIKFRSWWTNRQLRQDEAHVTVVGKGGVRNEVIRTRVRNAPKGPRTLDDGGFYDNDYEGLPGYLRFNGSGWMIHIGNGMYLSNTHTARSSCSEIVTCSPTTDLCLVKAEPIRSVAQIAEGTPVRDWKRASITTYGLKKTFSDSTKIDVLAYDGPTQTTHGDCGLPLFDEAGKVVAIHTGKLLGFSKMCTLIDCTITKGVYENTDLFCGDPIDYRGLVAFRVAGVEPRPPVSGTRYAKVPGVPEEYHTGYRPANLGRGDPDSHCTLMNIAVKNLQVYQQEPKLTKVDTFIERAAADVLGFLRFLTKGERQMNLNFSAAFNVLDLSTSCGPFVPGKKIDHVKDGKLDEVLSKHLYKCWSVANSGKALHHVYACGLKDELRPLDKVKEGKKRLLWGCNVGVALCAAAVFHNLCFKLKTVARFGPIAVGIDMTSRDVDVMITQLTSKAGDFLCLDYSKWDSTMSPCVVRLAIDILADCCEQTELTKSVVLTLKSLPMTVLDAMIVPTKRGLPSGMPFTSVINSICHWLLWSAAVYKACDEIGLFCSNLYEDAPFFVYGDDGVYAMTPMMVSLLPAILDNLRDYGLSPTAADKTEFIDVCPLKDISFLKRKFVMSELGWLSQLDRSSILRQLEWTKTAKRHMCIEECSELDKDERGVQLEELQIHAAAHGEEFFELVKKELRRQQAFTRFSVFDYQTARKTLGDRKRIVSVVPDDSFVNVMEGKPRADAPGTATTASVPGTTTDGMDPGVVASTDVVTADNVAASVATAGIGGPPQQASPQESWRVNFFYNDVFTWSVTDAPGSILYTVQHSPQNNPFTQVLSQMYAGWAGGMQFRFIVAGSGIFGGRLVCAIIPPGIQIQPGLEVRQFPHVVIDARSLEPVTITMPDLRPEMYHPTGNPGLVPTLVVSVYNNLINPFGGTTSAIQVTVETRPSEDFEFVLIRAPSSKTVDSVNPSWLLTTPVLTGAGSDNRWGAPIVGLQPVPGGFSTSNRHWNMNGETYGWSSPRFDDIDHPSGNVSYPSGSATNTIETWYANAGTATTNPISNIAPDGFPDMGAIPFSGTTIPTGAWVGFGQVWNASNGTPYVGTVQAYELGFANGAPSSIRPVTTTTGAQLVAKSIYGVAIAQNQTSAGIIFLSKGMVSTPGVAATTYTPQPSAIVTTPGTPVAAPIGKNTPIMFSAVVRRTGDVNAGPGSANGTQYGVGSQPLSVTLGLSLTNYSSALQPGQFFVWQLNFASGFMEVGMNTDGYFYAGTGAYSGMIDLTDLIDVRPVGVRPNTSTLVFNLAGVATTGYSYV.

Residues 487–647 enclose the SF3 helicase domain; that stretch reads QKVVADIHTL…EGWQSTRHGS (161 aa). Tyr-1007 is subject to O-(5'-phospho-RNA)-tyrosine. In terms of domain architecture, Peptidase C24 spans 1102–1237; sequence GLPGYLRFNG…SKMCTLIDCT (136 aa). Residues His-1128, Asp-1145, and Cys-1205 each act as for 3CLpro activity in the active site. The region spanning 1488 to 1612 is the RdRp catalytic domain; that stretch reads GDFLCLDYSK…AMTPMMVSLL (125 aa). Cys-1577 and Cys-1584 are oxidised to a cystine. Residues 1760-1784 are disordered; it reads EGKPRADAPGTATTASVPGTTTDGM. Positions 1767–1781 are enriched in low complexity; sequence APGTATTASVPGTTT.

It depends on Mn(2+) as a cofactor. In terms of processing, specific enzymatic cleavages by its own cysteine protease yield mature proteins. The protease cleaves itself from the nascent polyprotein autocatalytically. Precursor p41 can be cleaved by viral 3CLpro into protein p19 and VPg, or cleaved by host protease into protein p23/2 and protein p18. VPg is uridylylated by the polymerase and is covalently attached to the 5'-end of the polyadenylated genomic and subgenomic RNAs. This uridylylated form acts as a nucleotide-peptide primer for the polymerase.

Its subcellular location is the virion. The protein resides in the host cytoplasm. It carries out the reaction a ribonucleoside 5'-triphosphate + H2O = a ribonucleoside 5'-diphosphate + phosphate + H(+). It catalyses the reaction Endopeptidase with a preference for cleavage when the P1 position is occupied by Glu-|-Xaa and the P1' position is occupied by Gly-|-Yaa.. The enzyme catalyses RNA(n) + a ribonucleoside 5'-triphosphate = RNA(n+1) + diphosphate. Its function is as follows. Together with NTPase and NS4, initiates the formation of the replication complex. Induces the proliferation of the host smooth ER membranes forming long tubular structures. These remodeled membranes probably form the viral factories that contain the replication complex. Displays NTPase activity, but no helicase activity. Induces the formation of convoluted membranes derived from the host ER. These remodeled membranes probably form the viral factories that contain the replication complex. Together with NS2 and NS4, initiates the formation of the replication complex. Functionally, probable key protein responsible for the formation of membrane alterations by the virus. Induces the formation of convoluted membranes derived from the host ER. These remodeled membranes probably form the viral factories that contain the replication complex. Together with NS2 and NTPase, initiates the formation of the replication complex. In terms of biological role, viral genome-linked protein is covalently linked to the 5'-end of the positive-strand, negative-strand genomic RNAs and subgenomic RNA. Acts as a genome-linked replication primer. May recruit ribosome to viral RNA thereby promoting viral proteins translation. Interacts with host translation initiation complex to allow the translation of viral proteins. Its function is as follows. Processes the polyprotein. 3CLpro-RdRp is first released by autocleavage, then all other proteins are cleaved. May cleave polyadenylate-binding protein thereby inhibiting cellular translation. Replicates genomic and antigenomic RNA by recognizing replications specific signals. Also transcribes a subgenomic mRNA by initiating RNA synthesis internally on antigenomic RNA. This sgRNA codes for structural proteins. Catalyzes the covalent attachment VPg with viral RNAs. Functionally, capsid protein VP60 self assembles to form an icosahedral capsid with a T=3 symmetry, about 35 nm in diameter, and consisting of 180 capsid proteins. A smaller form of capsid with a diameter of 23 nm might be capsid proteins assembled as icosahedron with T=1 symmetry. The capsid encapsulate VP2 proteins and genomic or subgenomic RNA. Attaches virion to target cells by binding histo-blood group antigens, inducing endocytosis of the viral particle. Acidification of the endosome induces conformational change of capsid protein thereby injecting virus genomic RNA into host cytoplasm. This chain is Genome polyprotein, found in Lepus europaeus (European hare).